Consider the following 162-residue polypeptide: Phosphopantetheine adenylyltransferase (162 aa).

Threonine 10 contributes to the substrate binding site. ATP-binding positions include 10–11 (TF) and histidine 18. Positions 42, 74, and 88 each coordinate substrate. Residues 89 to 91 (GLR), glutamate 99, and 124 to 130 (FSCISST) contribute to the ATP site.

This sequence belongs to the bacterial CoaD family. Homohexamer. Mg(2+) serves as cofactor.

Its subcellular location is the cytoplasm. The catalysed reaction is (R)-4'-phosphopantetheine + ATP + H(+) = 3'-dephospho-CoA + diphosphate. The protein operates within cofactor biosynthesis; coenzyme A biosynthesis; CoA from (R)-pantothenate: step 4/5. Its function is as follows. Reversibly transfers an adenylyl group from ATP to 4'-phosphopantetheine, yielding dephospho-CoA (dPCoA) and pyrophosphate. The sequence is that of Phosphopantetheine adenylyltransferase from Francisella tularensis subsp. novicida (strain U112).